A 398-amino-acid chain; its full sequence is Succinate--CoA ligase [ADP-forming] subunit beta (398 aa).

An ATP-grasp domain is found at 9–254 (KRLLHTYGAP…LTEEDPKEIE (246 aa)). Residues K46, 53–55 (GRG), E109, A112, and E117 contribute to the ATP site. Mg(2+) contacts are provided by N209 and D223. Residues N274 and 331–333 (GIM) contribute to the substrate site.

It belongs to the succinate/malate CoA ligase beta subunit family. Heterotetramer of two alpha and two beta subunits. Mg(2+) is required as a cofactor.

The enzyme catalyses succinate + ATP + CoA = succinyl-CoA + ADP + phosphate. The catalysed reaction is GTP + succinate + CoA = succinyl-CoA + GDP + phosphate. It participates in carbohydrate metabolism; tricarboxylic acid cycle; succinate from succinyl-CoA (ligase route): step 1/1. Succinyl-CoA synthetase functions in the citric acid cycle (TCA), coupling the hydrolysis of succinyl-CoA to the synthesis of either ATP or GTP and thus represents the only step of substrate-level phosphorylation in the TCA. The beta subunit provides nucleotide specificity of the enzyme and binds the substrate succinate, while the binding sites for coenzyme A and phosphate are found in the alpha subunit. The sequence is that of Succinate--CoA ligase [ADP-forming] subunit beta from Brucella abortus (strain S19).